The primary structure comprises 488 residues: Glutamyl-tRNA(Gln) amidotransferase subunit A (488 aa).

Catalysis depends on charge relay system residues Lys-76 and Ser-152. The Acyl-ester intermediate role is filled by Ser-176.

The protein belongs to the amidase family. GatA subfamily. Heterotrimer of A, B and C subunits.

It carries out the reaction L-glutamyl-tRNA(Gln) + L-glutamine + ATP + H2O = L-glutaminyl-tRNA(Gln) + L-glutamate + ADP + phosphate + H(+). Functionally, allows the formation of correctly charged Gln-tRNA(Gln) through the transamidation of misacylated Glu-tRNA(Gln) in organisms which lack glutaminyl-tRNA synthetase. The reaction takes place in the presence of glutamine and ATP through an activated gamma-phospho-Glu-tRNA(Gln). The protein is Glutamyl-tRNA(Gln) amidotransferase subunit A of Oceanobacillus iheyensis (strain DSM 14371 / CIP 107618 / JCM 11309 / KCTC 3954 / HTE831).